Reading from the N-terminus, the 232-residue chain is Phosphatidylserine decarboxylase proenzyme (232 aa).

The active-site Schiff-base intermediate with substrate; via pyruvic acid is serine 190. Pyruvic acid (Ser); by autocatalysis is present on serine 190.

This sequence belongs to the phosphatidylserine decarboxylase family. PSD-A subfamily. As to quaternary structure, heterodimer of a large membrane-associated beta subunit and a small pyruvoyl-containing alpha subunit. Pyruvate serves as cofactor. In terms of processing, is synthesized initially as an inactive proenzyme. Formation of the active enzyme involves a self-maturation process in which the active site pyruvoyl group is generated from an internal serine residue via an autocatalytic post-translational modification. Two non-identical subunits are generated from the proenzyme in this reaction, and the pyruvate is formed at the N-terminus of the alpha chain, which is derived from the carboxyl end of the proenzyme. The post-translation cleavage follows an unusual pathway, termed non-hydrolytic serinolysis, in which the side chain hydroxyl group of the serine supplies its oxygen atom to form the C-terminus of the beta chain, while the remainder of the serine residue undergoes an oxidative deamination to produce ammonia and the pyruvoyl prosthetic group on the alpha chain.

The protein localises to the cell membrane. The enzyme catalyses a 1,2-diacyl-sn-glycero-3-phospho-L-serine + H(+) = a 1,2-diacyl-sn-glycero-3-phosphoethanolamine + CO2. The protein operates within phospholipid metabolism; phosphatidylethanolamine biosynthesis; phosphatidylethanolamine from CDP-diacylglycerol: step 2/2. Catalyzes the formation of phosphatidylethanolamine (PtdEtn) from phosphatidylserine (PtdSer). The sequence is that of Phosphatidylserine decarboxylase proenzyme from Cereibacter sphaeroides (strain KD131 / KCTC 12085) (Rhodobacter sphaeroides).